A 227-amino-acid chain; its full sequence is DNA utilization protein YhgH (227 aa).

Belongs to the ComF/GntX family.

Required for the use of extracellular DNA as a nutrient. Has been suggested to be involved in gluconate metabolism. In Escherichia coli (strain K12), this protein is DNA utilization protein YhgH.